The following is a 200-amino-acid chain: Integrin beta-1-binding protein 1 (200 aa).

Residues 1–10 are compositionally biased toward basic residues; sequence MFRKGKKRHS. Positions 1-55 are disordered; that stretch reads MFRKGKKRHSSSSSQSSEISTKSKSVDSSLGGLSRSSTVASLDTDSTKSSGQSNS. A Nuclear localization signal motif is present at residues 6 to 7; the sequence is KK. Residues 11 to 29 are compositionally biased toward low complexity; sequence SSSSQSSEISTKSKSVDSS. Residues 34 to 55 show a composition bias toward polar residues; that stretch reads SRSSTVASLDTDSTKSSGQSNS. T38 is modified (phosphothreonine; by CaMK2). Position 41 is a phosphoserine (S41). Residues 58–200 enclose the PID domain; it reads DTCAEFRIKY…FDSVLTSDKS (143 aa). The segment at 136–139 is interaction with KRIT1; that stretch reads YLII. The interval 139–141 is interaction with ITGB1; that stretch reads IRM.

In terms of assembly, found in a complex, at least composed of ITGB1BP1, KRIT1 and RAP1A. Interacts (via C-terminal region) with ITGB1 (via C-terminal cytoplasmic tail); the interaction prevents talin TLN1 binding to ITGB1 and KRIT1 and ITGB1 compete for the same binding site. Interacts with KRIT1 (via N-terminal NPXY motif); the interaction induces the opening conformation of KRIT1 and KRIT1 and ITGB1 compete for the same binding site. Isoform 2 does not interact with ITGB1. Interacts with CDC42 (GTP- or GDP-bound form); the interaction is increased with the CDC42-membrane bound forms and prevents both CDC42 activation and cell spreading. Interacts (via C-terminal domain region) with NME2. Interacts with FERMT2 and RAC1. Interacts (via N-terminus and PTB domain) with ROCK1. In terms of processing, phosphorylation at Thr-38 seems to enhance integrin alpha5beta1-mediated cell adhesion. The degree of phosphorylation is regulated by integrin-dependent cell-matrix interaction. Expressed in the brain.

It is found in the nucleus. It localises to the cytoplasm. The protein localises to the cytoskeleton. The protein resides in the cell membrane. Its subcellular location is the cell projection. It is found in the lamellipodium. It localises to the ruffle. Key regulator of the integrin-mediated cell-matrix interaction signaling by binding to the ITGB1 cytoplasmic tail and preventing the activation of integrin alpha-5/beta-1 (heterodimer of ITGA5 and ITGB1) by talin or FERMT1. Plays a role in cell proliferation, differentiation, spreading, adhesion and migration in the context of mineralization and bone development and angiogenesis. Stimulates cellular proliferation in a fibronectin-dependent manner. Involved in the regulation of beta-1 integrin-containing focal adhesion (FA) site dynamics by controlling its assembly rate during cell adhesion; inhibits beta-1 integrin clustering within FA by directly competing with talin TLN1, and hence stimulates osteoblast spreading and migration in a fibronectin- and/or collagen-dependent manner. Acts as a guanine nucleotide dissociation inhibitor (GDI) by regulating Rho family GTPases during integrin-mediated cell matrix adhesion; reduces the level of active GTP-bound form of both CDC42 and RAC1 GTPases upon cell adhesion to fibronectin. Stimulates the release of active CDC42 from the membranes to maintain it in an inactive cytoplasmic pool. Participates in the translocation of the Rho-associated protein kinase ROCK1 to membrane ruffles at cell leading edges of the cell membrane, leading to an increase of myoblast cell migration on laminin. Plays a role in bone mineralization at a late stage of osteoblast differentiation; modulates the dynamic formation of focal adhesions into fibrillar adhesions, which are adhesive structures responsible for fibronectin deposition and fibrillogenesis. Plays a role in blood vessel development; acts as a negative regulator of angiogenesis by attenuating endothelial cell proliferation and migration, lumen formation and sprouting angiogenesis by promoting AKT phosphorylation and inhibiting ERK1/2 phosphorylation through activation of the Notch signaling pathway. Promotes transcriptional activity of the MYC promoter. The polypeptide is Integrin beta-1-binding protein 1 (Itgb1bp1) (Mus musculus (Mouse)).